We begin with the raw amino-acid sequence, 346 residues long: Sensor histidine kinase GraS (346 aa).

2 helical membrane passes run 15-35 (INWI…AYID) and 43-63 (VFYI…FTFV). A Histidine kinase domain is found at 126–332 (EFVHDIKTPV…TFYFIFPQQN (207 aa)). Histidine 129 carries the post-translational modification Phosphohistidine; by autocatalysis.

Post-translationally, autophosphorylated.

The protein localises to the cell membrane. It carries out the reaction ATP + protein L-histidine = ADP + protein N-phospho-L-histidine.. Member of the two-component regulatory system GraR/GraS involved in resistance against cationic antimicrobial peptides (CAMPs). GraS probably functions as a sensor protein kinase which is autophosphorylated at a histidine residue and transfers its phosphate group to GraR. This Staphylococcus epidermidis (strain ATCC 35984 / DSM 28319 / BCRC 17069 / CCUG 31568 / BM 3577 / RP62A) protein is Sensor histidine kinase GraS (graS).